The sequence spans 626 residues: Leucine aminopeptidase 2-1 (626 aa).

Substrate contacts are provided by residues 134–136 and 259–264; these read QCQ and PYGGME. His288 provides a ligand contact to Zn(2+). The active-site Proton acceptor is Glu289. Zn(2+)-binding residues include His292 and Glu311. Tyr389 functions as the Proton donor in the catalytic mechanism.

This sequence belongs to the peptidase M1 family. The cofactor is Zn(2+).

The protein localises to the cytoplasm. The protein resides in the nucleus. It carries out the reaction an epoxide + H2O = an ethanediol. In terms of biological role, aminopeptidase that preferentially cleaves di- and tripeptides. Also has low epoxide hydrolase activity (in vitro). Can hydrolyze the epoxide leukotriene LTA(4) but it forms preferentially 5,6-dihydroxy-7,9,11,14-eicosatetraenoic acid rather than the cytokine leukotriene B(4) as the product compared to the homologous mammalian enzyme (in vitro). This is Leucine aminopeptidase 2-1 (LKA4) from Scheffersomyces stipitis (strain ATCC 58785 / CBS 6054 / NBRC 10063 / NRRL Y-11545) (Yeast).